We begin with the raw amino-acid sequence, 107 residues long: Small ribosomal subunit protein uS10 (107 aa).

The protein belongs to the universal ribosomal protein uS10 family. Part of the 30S ribosomal subunit.

Its function is as follows. Involved in the binding of tRNA to the ribosomes. The sequence is that of Small ribosomal subunit protein uS10 from Deinococcus geothermalis (strain DSM 11300 / CIP 105573 / AG-3a).